We begin with the raw amino-acid sequence, 595 residues long: Sialic acid-binding Ig-like lectin 12 (595 aa).

The signal sequence occupies residues 1–18 (MLLLLLLLPPLLCGRVGA). Ig-like V-type domains follow at residues 19 to 142 (KEQK…VNVT) and 143 to 269 (ASQD…VHVT). The Extracellular portion of the chain corresponds to 19–481 (KEQKDYLLTM…RPISGVTLGA (463 aa)). Cysteines 44 and 104 form a disulfide. Asn-140, Asn-179, Asn-230, and Asn-290 each carry an N-linked (GlcNAc...) asparagine glycan. Disulfide bonds link Cys-166–Cys-299, Cys-171–Cys-231, and Cys-293–Cys-342. Residues 275–358 (PTFSIPGTLE…AGVTMTRAVR (84 aa)) enclose the Ig-like C2-type 1 domain. N-linked (GlcNAc...) asparagine glycosylation is found at Asn-360, Asn-367, and Asn-385. In terms of domain architecture, Ig-like C2-type 2 spans 365–462 (PQNLTMTVFQ…GSQHISLSLS (98 aa)). Residues Cys-401 and Cys-446 are joined by a disulfide bond. A helical transmembrane segment spans residues 482–502 (FGGAGATALVFLYFCIIFVVV). The Cytoplasmic segment spans residues 503–595 (RSCRKKSARP…YEYSEINIPK (93 aa)). Residues 512-560 (PAVGVGDTGMEDANAVRGSASQGPLIESPADDSPPHHAPPALATPSPEE) form a disordered region. The ITIM motif motif lies at 563–568 (IQYASL). 2 positions are modified to phosphotyrosine: Tyr-565 and Tyr-588. Residues 586–591 (YEYSEI) carry the SLAM-like motif motif.

This sequence belongs to the immunoglobulin superfamily. SIGLEC (sialic acid binding Ig-like lectin) family. As to expression, isoform Short is highly expressed in spleen, small intestine and adrenal gland; it is lower expressed in thyroid, placenta, brain, stomach, bone marrow, spinal cord and breast. Isoform Long is highly expressed in spleen, small intestine and bone marrow; it is lower expressed in thyroid, placenta, thymus, trachea, stomach, lung, adrenal gland, fetal brain and testis.

It localises to the membrane. In terms of biological role, putative adhesion molecule that mediates sialic-acid dependent binding to cells. The sialic acid recognition site may be masked by cis interactions with sialic acids on the same cell surface. This is Sialic acid-binding Ig-like lectin 12 (SIGLEC12) from Homo sapiens (Human).